A 211-amino-acid polypeptide reads, in one-letter code: uncharacterized protein (211 aa).

The N-terminal stretch at 1–27 (MKRTSAALVVFLILLFLGLLFLPMFIV) is a signal peptide.

This is an uncharacterized protein from Archaeoglobus fulgidus (strain ATCC 49558 / DSM 4304 / JCM 9628 / NBRC 100126 / VC-16).